The sequence spans 901 residues: MLIPSKLSRPVRLDHTVVRERLLAKLSGANNFRLALITSPAGYGKTTLISQWAAGKNDIGWYSLDEGNNQQERFASYLIAAVQQATNGHCAICETMEQKRQYASLTSLFAQLFIELAEWHSPLYLVIDDYHLITNPVIHESMRFFIRHQPENLTLVVLSRNLPQLGIANLRVRDQLLEIGSQKLAFTHQEAKQFFDCRLSSPIEAAESSRICDDVSGWATALQLIALSARQNTHSAHKSARRLAGINASHLSDYLVDEVLDNVDLATRHFLLKSAILRSMNDALITRVTGEENGQMRLEEIERQGLFLQRMDDTGEWFCYHPLFGNFLRQRCQWELAAELPEIHRAAAESWMAQGFPSEAIHHALAAGDALMLRDILLNHAWSLFNHSELSLLEESLKALPWDSLLENPQLVLLQAWLMQSQHRYGEVNTLLARAEHEIKDIREGTMHAEFNALRAQVAINDGNQDEAERLAKLALEELPPGWFYSRIVATSVLGEVLHCKGELTRSLALVQQTEQMARQHDVWHYALWSLIQQSEILFAQGFLQTAWETQEKAFQLINEQHLEQLPMHEFLVRIRAQLLWTWARLDEAEASARSGIEVLSSYQPQQQLQCLAMLIQCSLARGDLDNARSQLNRLENLLGNGKYHSDWISNANKVRVIYWQMTGDKAAAANWLRHTAKPEFANNHFLQGQWRNIARAQILLGEFEPAEIVLEELNENARSLRLMSDLNRNLLLLNQLYWQAGRKSDAQRVLLDALKLANRTGFISHFVIEGEAMAQQLRQLIQLNTLPELEQHRAQRILREINQHHRHKFAHFDENFVERLLNHPEVPELIRTSPLTQREWQVLGLIYSGYSNEQIAGELEVAATTIKTHIRNLYQKLGVAHRQAAVQHAQKLLKMMGYGV.

Serine 39–threonine 46 provides a ligand contact to ATP. One can recognise an HTH luxR-type domain in the interval glutamate 829–leucine 894. The segment at residues asparagine 853–arginine 872 is a DNA-binding region (H-T-H motif).

Belongs to the MalT family. In terms of assembly, monomer in solution. Oligomerizes to an active state in the presence of the positive effectors ATP and maltotriose.

With respect to regulation, activated by ATP and maltotriose, which are both required for DNA binding. Functionally, positively regulates the transcription of the maltose regulon whose gene products are responsible for uptake and catabolism of malto-oligosaccharides. Specifically binds to the promoter region of its target genes, recognizing a short DNA motif called the MalT box. This Shigella flexneri serotype 5b (strain 8401) protein is HTH-type transcriptional regulator MalT.